The chain runs to 589 residues: Aspartate--tRNA ligase (589 aa).

Residue E175 participates in L-aspartate binding. The interval 199–202 (QLFK) is aspartate. Residue R221 coordinates L-aspartate. ATP contacts are provided by residues 221-223 (RDE) and Q230. H449 contributes to the L-aspartate binding site. Residue E483 coordinates ATP. R490 is an L-aspartate binding site. 535-538 (GLDR) contributes to the ATP binding site.

It belongs to the class-II aminoacyl-tRNA synthetase family. Type 1 subfamily. As to quaternary structure, homodimer.

The protein resides in the cytoplasm. It carries out the reaction tRNA(Asp) + L-aspartate + ATP = L-aspartyl-tRNA(Asp) + AMP + diphosphate. Functionally, catalyzes the attachment of L-aspartate to tRNA(Asp) in a two-step reaction: L-aspartate is first activated by ATP to form Asp-AMP and then transferred to the acceptor end of tRNA(Asp). This chain is Aspartate--tRNA ligase, found in Lysinibacillus sphaericus (strain C3-41).